A 236-amino-acid polypeptide reads, in one-letter code: 2-C-methyl-D-erythritol 4-phosphate cytidylyltransferase (236 aa).

Belongs to the IspD/TarI cytidylyltransferase family. IspD subfamily. In terms of assembly, homodimer.

It carries out the reaction 2-C-methyl-D-erythritol 4-phosphate + CTP + H(+) = 4-CDP-2-C-methyl-D-erythritol + diphosphate. Its pathway is isoprenoid biosynthesis; isopentenyl diphosphate biosynthesis via DXP pathway; isopentenyl diphosphate from 1-deoxy-D-xylulose 5-phosphate: step 2/6. In terms of biological role, catalyzes the formation of 4-diphosphocytidyl-2-C-methyl-D-erythritol from CTP and 2-C-methyl-D-erythritol 4-phosphate (MEP). This chain is 2-C-methyl-D-erythritol 4-phosphate cytidylyltransferase, found in Shigella flexneri serotype 5b (strain 8401).